An 87-amino-acid polypeptide reads, in one-letter code: MAIKMRLQRFGVHKRPFYRVVASESKNARDGKFLEILGTYDTILDIVELDHNKAQKWLSNGAQPTKTVKKVFKKSKFVAKNKTKFEK.

The protein belongs to the bacterial ribosomal protein bS16 family.

This chain is Small ribosomal subunit protein bS16, found in Aster yellows witches'-broom phytoplasma (strain AYWB).